We begin with the raw amino-acid sequence, 315 residues long: MESSSKGLLTQVTQFWNLLDDLAESNPESYQKFIQQQLKEGKELCAAPEPQLCLQTRILKPKEKLLFINLCQWKRIPAPESATHPVPLSIGRPEDISETSDVYTVIDVAYHPDVLQAAEKDQVKKDQLIRMAMRCIEEQFQFTLSNCYYVTKFRIKGSIQRMKQNLMGIQTNPADLREKMRNELTLEKIRSSTVSNSDQFPQLLLPEDQVSSKTACLIEEISSTEIKVEMKRPAYELKIVADQNEKPLKIELKVELPGVNSVSLCDLSVSEDDILIEVSEKYRLYLNLPESVDTEMTTAKFIKEKATLIVTMPLV.

The protein belongs to the PIH1 family.

The chain is PIH1 domain-containing protein 2 (PIH1D2) from Bos taurus (Bovine).